The primary structure comprises 88 residues: Monensin polyketide synthase acyl carrier protein (88 aa).

In terms of domain architecture, Carrier spans 5–82; it reads PFTLADLQRI…ELIDHVNERL (78 aa). Serine 42 is subject to O-(pantetheine 4'-phosphoryl)serine.

4'-phosphopantetheine is transferred from CoA to a specific serine of the apo-ACP-like protein.

Its pathway is antifungal biosynthesis; monensin biosynthesis. Functionally, acyl carrier protein. In Streptomyces virginiae (Streptomyces cinnamonensis), this protein is Monensin polyketide synthase acyl carrier protein.